Here is a 137-residue protein sequence, read N- to C-terminus: Large ribosomal subunit protein uL16 (137 aa).

This sequence belongs to the universal ribosomal protein uL16 family. Part of the 50S ribosomal subunit.

Binds 23S rRNA and is also seen to make contacts with the A and possibly P site tRNAs. This is Large ribosomal subunit protein uL16 from Azotobacter vinelandii (strain DJ / ATCC BAA-1303).